We begin with the raw amino-acid sequence, 297 residues long: Cytidine deaminase (297 aa).

CMP/dCMP-type deaminase domains lie at Ser-50 to Lys-170 and Glu-189 to Leu-297. Residue Asn-91–Glu-93 participates in substrate binding. His-104 is a Zn(2+) binding site. The Proton donor role is filled by Glu-106. The Zn(2+) site is built by Cys-131 and Cys-134.

It belongs to the cytidine and deoxycytidylate deaminase family. In terms of assembly, homodimer. The cofactor is Zn(2+).

The enzyme catalyses cytidine + H2O + H(+) = uridine + NH4(+). It carries out the reaction 2'-deoxycytidine + H2O + H(+) = 2'-deoxyuridine + NH4(+). This enzyme scavenges exogenous and endogenous cytidine and 2'-deoxycytidine for UMP synthesis. The chain is Cytidine deaminase from Aliivibrio fischeri (strain ATCC 700601 / ES114) (Vibrio fischeri).